We begin with the raw amino-acid sequence, 625 residues long: tRNA uridine 5-carboxymethylaminomethyl modification enzyme MnmG (625 aa).

Residue 14-19 (GAGHAG) coordinates FAD. 273 to 287 (GPRYCPSIEDKIVRF) contacts NAD(+).

The protein belongs to the MnmG family. Homodimer. Heterotetramer of two MnmE and two MnmG subunits. Requires FAD as cofactor.

It is found in the cytoplasm. Its function is as follows. NAD-binding protein involved in the addition of a carboxymethylaminomethyl (cmnm) group at the wobble position (U34) of certain tRNAs, forming tRNA-cmnm(5)s(2)U34. The chain is tRNA uridine 5-carboxymethylaminomethyl modification enzyme MnmG from Clostridium botulinum (strain Hall / ATCC 3502 / NCTC 13319 / Type A).